Consider the following 391-residue polypeptide: F-box/kelch-repeat protein At4g05080 (391 aa).

The 48-residue stretch at 2–49 (TMMFDLTQDLVKEILSRVPITSLGAVRSTCKGWNALSKDRILCKAKPK) folds into the F-box domain. Kelch repeat units follow at residues 100 to 143 (HMYY…TFCL) and 144 to 194 (RYDN…SASV). Positions 369–385 (RRRRERNSKRKEKKRKG) are enriched in basic residues. The disordered stretch occupies residues 369–391 (RRRRERNSKRKEKKRKGTTNNKV).

This is F-box/kelch-repeat protein At4g05080 from Arabidopsis thaliana (Mouse-ear cress).